The primary structure comprises 660 residues: Methionine--tRNA ligase (660 aa).

Residues 15–25 (YYPSDKLHIGH) carry the 'HIGH' region motif. The 'KMSKS' region signature appears at 311–315 (KMSKS). ATP is bound at residue lysine 314. Positions 535–554 (LMGGSKKPEEAPKDEKEESD) are disordered. The segment covering 540–550 (KKPEEAPKDEK) has biased composition (basic and acidic residues). The 101-residue stretch at 560–660 (DFSKVELRIA…GALPNGSLVK (101 aa)) folds into the tRNA-binding domain.

This sequence belongs to the class-I aminoacyl-tRNA synthetase family. MetG type 2B subfamily. Homodimer.

It localises to the cytoplasm. It catalyses the reaction tRNA(Met) + L-methionine + ATP = L-methionyl-tRNA(Met) + AMP + diphosphate. Its function is as follows. Is required not only for elongation of protein synthesis but also for the initiation of all mRNA translation through initiator tRNA(fMet) aminoacylation. This is Methionine--tRNA ligase (metG) from Halalkalibacterium halodurans (strain ATCC BAA-125 / DSM 18197 / FERM 7344 / JCM 9153 / C-125) (Bacillus halodurans).